We begin with the raw amino-acid sequence, 725 residues long: Fatty acid oxidation complex subunit alpha (725 aa).

The tract at residues 1–189 (MIYQGENLSV…ALGMIDGVVS (189 aa)) is enoyl-CoA hydratase/isomerase. Asp-296 provides a ligand contact to substrate. A 3-hydroxyacyl-CoA dehydrogenase region spans residues 311–725 (EPVTSAAVLG…APQSLSAPSA (415 aa)). NAD(+) contacts are provided by residues Met-324, Asp-343, 400–402 (VVE), Lys-407, and Ser-429. Catalysis depends on His-450, which acts as the For 3-hydroxyacyl-CoA dehydrogenase activity. Asn-453 is an NAD(+) binding site. Asn-500 and Tyr-660 together coordinate substrate.

The protein in the N-terminal section; belongs to the enoyl-CoA hydratase/isomerase family. It in the C-terminal section; belongs to the 3-hydroxyacyl-CoA dehydrogenase family. In terms of assembly, heterotetramer of two alpha chains (FadB) and two beta chains (FadA).

The catalysed reaction is a (3S)-3-hydroxyacyl-CoA + NAD(+) = a 3-oxoacyl-CoA + NADH + H(+). It carries out the reaction a (3S)-3-hydroxyacyl-CoA = a (2E)-enoyl-CoA + H2O. The enzyme catalyses a 4-saturated-(3S)-3-hydroxyacyl-CoA = a (3E)-enoyl-CoA + H2O. It catalyses the reaction (3S)-3-hydroxybutanoyl-CoA = (3R)-3-hydroxybutanoyl-CoA. The catalysed reaction is a (3Z)-enoyl-CoA = a 4-saturated (2E)-enoyl-CoA. It carries out the reaction a (3E)-enoyl-CoA = a 4-saturated (2E)-enoyl-CoA. It participates in lipid metabolism; fatty acid beta-oxidation. Involved in the aerobic and anaerobic degradation of long-chain fatty acids via beta-oxidation cycle. Catalyzes the formation of 3-oxoacyl-CoA from enoyl-CoA via L-3-hydroxyacyl-CoA. It can also use D-3-hydroxyacyl-CoA and cis-3-enoyl-CoA as substrate. This chain is Fatty acid oxidation complex subunit alpha, found in Aliivibrio fischeri (strain MJ11) (Vibrio fischeri).